The primary structure comprises 465 residues: Putative F-box protein At1g21990 (465 aa).

The 47-residue stretch at 8–54 (RDLISGSPDEILGKILSFLPTHHAATTSVLSKRWRNLLPLVDKLELT) folds into the F-box domain.

The sequence is that of Putative F-box protein At1g21990 from Arabidopsis thaliana (Mouse-ear cress).